The chain runs to 91 residues: Large ribosomal subunit protein bL31B (91 aa).

It belongs to the bacterial ribosomal protein bL31 family. Type B subfamily. In terms of assembly, part of the 50S ribosomal subunit.

In Neisseria meningitidis serogroup A / serotype 4A (strain DSM 15465 / Z2491), this protein is Large ribosomal subunit protein bL31B.